Here is a 336-residue protein sequence, read N- to C-terminus: tRNA-cytidine(32) 2-sulfurtransferase (336 aa).

The tract at residues 1–34 (MNAPEILNGAATASPADATEATQTAARAKTPLTR) is disordered. Low complexity predominate over residues 10 to 22 (AATASPADATEAT). A PP-loop motif motif is present at residues 75–80 (SGGKDS). 3 residues coordinate [4Fe-4S] cluster: Cys150, Cys153, and Cys241.

Belongs to the TtcA family. In terms of assembly, homodimer. It depends on Mg(2+) as a cofactor. [4Fe-4S] cluster serves as cofactor.

Its subcellular location is the cytoplasm. The catalysed reaction is cytidine(32) in tRNA + S-sulfanyl-L-cysteinyl-[cysteine desulfurase] + AH2 + ATP = 2-thiocytidine(32) in tRNA + L-cysteinyl-[cysteine desulfurase] + A + AMP + diphosphate + H(+). The protein operates within tRNA modification. Its function is as follows. Catalyzes the ATP-dependent 2-thiolation of cytidine in position 32 of tRNA, to form 2-thiocytidine (s(2)C32). The sulfur atoms are provided by the cysteine/cysteine desulfurase (IscS) system. This Paraburkholderia phytofirmans (strain DSM 17436 / LMG 22146 / PsJN) (Burkholderia phytofirmans) protein is tRNA-cytidine(32) 2-sulfurtransferase.